The following is a 190-amino-acid chain: ATP synthase subunit b (190 aa).

Residues 34–54 (LDIFETNLINLAILVGILFYF) traverse the membrane as a helical segment.

It belongs to the ATPase B chain family. As to quaternary structure, F-type ATPases have 2 components, F(1) - the catalytic core - and F(0) - the membrane proton channel. F(1) has five subunits: alpha(3), beta(3), gamma(1), delta(1), epsilon(1). F(0) has four main subunits: a(1), b(1), b'(1) and c(10-14). The alpha and beta chains form an alternating ring which encloses part of the gamma chain. F(1) is attached to F(0) by a central stalk formed by the gamma and epsilon chains, while a peripheral stalk is formed by the delta, b and b' chains.

Its subcellular location is the cellular thylakoid membrane. In terms of biological role, f(1)F(0) ATP synthase produces ATP from ADP in the presence of a proton or sodium gradient. F-type ATPases consist of two structural domains, F(1) containing the extramembraneous catalytic core and F(0) containing the membrane proton channel, linked together by a central stalk and a peripheral stalk. During catalysis, ATP synthesis in the catalytic domain of F(1) is coupled via a rotary mechanism of the central stalk subunits to proton translocation. Its function is as follows. Component of the F(0) channel, it forms part of the peripheral stalk, linking F(1) to F(0). This chain is ATP synthase subunit b, found in Nostoc punctiforme (strain ATCC 29133 / PCC 73102).